We begin with the raw amino-acid sequence, 352 residues long: C-C chemokine receptor type 5 (352 aa).

The Extracellular segment spans residues 1–30 (MDYQVSSPTYDIDYNTSEPCQKINVKQIAA). Tyrosine 3 is subject to Sulfotyrosine. O-linked (GalNAc...) serine glycosylation is found at serine 6 and serine 7. Sulfotyrosine occurs at positions 10 and 14. Disulfide bonds link cysteine 20–cysteine 269 and cysteine 101–cysteine 178. A helical transmembrane segment spans residues 31 to 58 (RLLPLLYSLVFIFGFVGNILVVLILINC). Topologically, residues 59–68 (KRLKSMTDIY) are cytoplasmic. A helical transmembrane segment spans residues 69–89 (LLNLAISDLLFLLTVPFWAHY). The Extracellular portion of the chain corresponds to 90-102 (AAAQWDFGNTMCQ). Residues 103–124 (LLTGLYFIGFFSGIFFIILLTI) traverse the membrane as a helical segment. Residues 125–141 (DRYLAIVHAVFALKART) lie on the Cytoplasmic side of the membrane. Residues 142 to 166 (VTFGVVTSVITWVVAVFASLPRIIF) traverse the membrane as a helical segment. Residues 167-198 (TRSQREGLHYTCSSHFPYSQYQFWKNFQTLKI) lie on the Extracellular side of the membrane. Residues 199 to 218 (VILGLVLPLLVMVICYSGIL) traverse the membrane as a helical segment. The Cytoplasmic segment spans residues 219-235 (KTLLRCRNEKKRHRAVR). The chain crosses the membrane as a helical span at residues 236-260 (LIFTIMIVYFLFWAPYNIVLLLNTF). At 261–277 (QEFFGLNNCSSSNRLDQ) the chain is on the extracellular side. A helical transmembrane segment spans residues 278–301 (AMQVTETLGMTHCCINPIIYAFVG). At 302–352 (EKFRNYLLVFFQKHIAKRFCKCCSIFQQEAPERASSVYTRSTGEQEISVGL) the chain is on the cytoplasmic side. Residues cysteine 321, cysteine 323, and cysteine 324 are each lipidated (S-palmitoyl cysteine). Residues serine 336, serine 337, serine 342, and serine 349 each carry the phosphoserine; by BARK1 modification.

The protein belongs to the G-protein coupled receptor 1 family. As to quaternary structure, interacts with PRAF2. Efficient ligand binding to CCL3/MIP-1alpha and CCL4/MIP-1beta requires sulfation, O-glycosylation and sialic acid modifications. Glycosylation on Ser-6 is required for efficient binding of CCL4. Interacts with GRK2. Interacts with ARRB1 and ARRB2. Interacts with CNIH4. Interacts with S100A4; this interaction stimulates T-lymphocyte chemotaxis. In terms of processing, sulfated on at least 2 of the N-terminal tyrosines. Sulfation is required for efficient binding of the chemokines, CCL3 and CCL4. Palmitoylation in the C-terminal is important for cell surface expression. Post-translationally, phosphorylation on serine residues in the C-terminal is stimulated by binding CC chemokines especially by APO-RANTES. In terms of processing, O-glycosylated, but not N-glycosylated. Ser-6 appears to be the major site even if Ser-7 may be also O-glycosylated. Also sialylated glycans present which contribute to chemokine binding. Thr-16 and Ser-17 may also be glycosylated and, if so, with small moieties such as a T-antigen.

The protein localises to the cell membrane. Functionally, receptor for a number of inflammatory CC-chemokines including CCL3/MIP-1-alpha, CCL4/MIP-1-beta and RANTES and subsequently transduces a signal by increasing the intracellular calcium ion level. May play a role in the control of granulocytic lineage proliferation or differentiation. Participates in T-lymphocyte migration to the infection site by acting as a chemotactic receptor. This chain is C-C chemokine receptor type 5 (CCR5), found in Cercopithecus cephus (Moustached monkey).